The sequence spans 161 residues: Ribosome maturation factor RimP (161 aa).

The protein belongs to the RimP family.

The protein localises to the cytoplasm. Required for maturation of 30S ribosomal subunits. The chain is Ribosome maturation factor RimP from Rickettsia felis (strain ATCC VR-1525 / URRWXCal2) (Rickettsia azadi).